A 124-amino-acid polypeptide reads, in one-letter code: Protein MGF 110-8L (124 aa).

The N-terminal stretch at 1-16 (MKVLILVLLGVVILQA) is a signal peptide. N-linked (GlcNAc...) asparagine; by host glycans are attached at residues asparagine 76 and asparagine 94.

Belongs to the asfivirus MGF 110 family.

In terms of biological role, plays a role in virus cell tropism, and may be required for efficient virus replication in macrophages. This Ornithodoros (relapsing fever ticks) protein is Protein MGF 110-8L.